The chain runs to 467 residues: Probable protein phosphatase 2C 6 (467 aa).

A disordered region spans residues 61 to 81 (VEDDAVAPGRGEEGGEASAVG). In terms of domain architecture, PPM-type phosphatase spans 149–457 (LWGHKSICGR…DNISVIVVDL (309 aa)). Mn(2+) contacts are provided by Asp-205, Gly-206, Asp-386, and Asp-448.

It belongs to the PP2C family. Interacts with PYL9. It depends on Mg(2+) as a cofactor. The cofactor is Mn(2+).

The protein resides in the nucleus. The protein localises to the cytoplasm. It localises to the cytosol. The catalysed reaction is O-phospho-L-seryl-[protein] + H2O = L-seryl-[protein] + phosphate. It carries out the reaction O-phospho-L-threonyl-[protein] + H2O = L-threonyl-[protein] + phosphate. Probable protein phosphatase that may function in abscisic acid (ABA) signaling. The protein is Probable protein phosphatase 2C 6 of Oryza sativa subsp. japonica (Rice).